We begin with the raw amino-acid sequence, 481 residues long: Alginate biosynthesis protein AlgA (481 aa).

Belongs to the mannose-6-phosphate isomerase type 2 family. In terms of assembly, monomer. The cofactor is Co(2+).

It carries out the reaction D-mannose 6-phosphate = D-fructose 6-phosphate. It catalyses the reaction alpha-D-mannose 1-phosphate + GTP + H(+) = GDP-alpha-D-mannose + diphosphate. Its pathway is nucleotide-sugar biosynthesis; GDP-alpha-D-mannose biosynthesis; GDP-alpha-D-mannose from alpha-D-mannose 1-phosphate (GTP route): step 1/1. It participates in nucleotide-sugar biosynthesis; GDP-alpha-D-mannose biosynthesis; alpha-D-mannose 1-phosphate from D-fructose 6-phosphate: step 1/2. In terms of biological role, produces a precursor for alginate polymerization. The alginate layer provides a protective barrier against host immune defenses and antibiotics. The sequence is that of Alginate biosynthesis protein AlgA (algA) from Pseudomonas aeruginosa (strain ATCC 15692 / DSM 22644 / CIP 104116 / JCM 14847 / LMG 12228 / 1C / PRS 101 / PAO1).